The chain runs to 314 residues: DNA-directed RNA polymerase subunit alpha (314 aa).

An alpha N-terminal domain (alpha-NTD) region spans residues 1-228; sequence MIEIEKPRIE…EHLNIFVDLT (228 aa). Positions 245-314 are alpha C-terminal domain (alpha-CTD); sequence KEKVLEMSIE…DLGLGLRKED (70 aa).

This sequence belongs to the RNA polymerase alpha chain family. As to quaternary structure, homodimer. The RNAP catalytic core consists of 2 alpha, 1 beta, 1 beta' and 1 omega subunit. When a sigma factor is associated with the core the holoenzyme is formed, which can initiate transcription.

The catalysed reaction is RNA(n) + a ribonucleoside 5'-triphosphate = RNA(n+1) + diphosphate. Its function is as follows. DNA-dependent RNA polymerase catalyzes the transcription of DNA into RNA using the four ribonucleoside triphosphates as substrates. The sequence is that of DNA-directed RNA polymerase subunit alpha from Macrococcus caseolyticus (strain JCSC5402) (Macrococcoides caseolyticum).